The chain runs to 576 residues: uncharacterized protein (576 aa).

The protein belongs to the chlamydial CPn_0065/CT_288/TC_0561 family.

This is an uncharacterized protein from Chlamydia pneumoniae (Chlamydophila pneumoniae).